A 121-amino-acid chain; its full sequence is Probable K(+)/H(+) antiporter subunit G (121 aa).

3 helical membrane passes run 10-32 (WAALLVCGLMLVGAATTLIGSLG), 45-67 (APTIATSGGTILLCLASILCFAV), and 72-94 (WVFHEVLIIFFVTVTTPVTLMLL).

This sequence belongs to the CPA3 antiporters (TC 2.A.63) subunit G family. As to quaternary structure, may form a hetero-oligomeric complex that consists of six subunits: PhaAB, PhaC, PhaD, PhaE, PhaF and PhaG.

It localises to the cell membrane. Its function is as follows. Part of a K(+) efflux system which is required for the adaptation of R.meliloti to alkaline pH as well as for the infection process during symbiotic nodule development. This is Probable K(+)/H(+) antiporter subunit G (phaG) from Rhizobium meliloti (strain 1021) (Ensifer meliloti).